The following is a 233-amino-acid chain: Ribonuclease 3 (233 aa).

The region spanning 5 to 127 is the RNase III domain; the sequence is LERLCRKLGY…VIGAVYLDGG (123 aa). Glu40 is a binding site for Mg(2+). Asp44 is a catalytic residue. Residues Asp113 and Glu116 each contribute to the Mg(2+) site. Residue Glu116 is part of the active site. The DRBM domain maps to 156–226; that stretch reads DPKTRLQEYL…ATRALALLLA (71 aa).

This sequence belongs to the ribonuclease III family. As to quaternary structure, homodimer. Mg(2+) is required as a cofactor.

The protein localises to the cytoplasm. It carries out the reaction Endonucleolytic cleavage to 5'-phosphomonoester.. Functionally, digests double-stranded RNA. Involved in the processing of primary rRNA transcript to yield the immediate precursors to the large and small rRNAs (23S and 16S). Processes some mRNAs, and tRNAs when they are encoded in the rRNA operon. Processes pre-crRNA and tracrRNA of type II CRISPR loci if present in the organism. In Nitrosococcus oceani (strain ATCC 19707 / BCRC 17464 / JCM 30415 / NCIMB 11848 / C-107), this protein is Ribonuclease 3.